Reading from the N-terminus, the 384-residue chain is N-acetyldiaminopimelate deacetylase (384 aa).

The active site involves aspartate 74. The active-site Proton acceptor is glutamate 133.

The protein belongs to the peptidase M20A family. N-acetyldiaminopimelate deacetylase subfamily.

It catalyses the reaction N-acetyl-(2S,6S)-2,6-diaminopimelate + H2O = (2S,6S)-2,6-diaminopimelate + acetate. It participates in amino-acid biosynthesis; L-lysine biosynthesis via DAP pathway; LL-2,6-diaminopimelate from (S)-tetrahydrodipicolinate (acetylase route): step 3/3. Catalyzes the conversion of N-acetyl-diaminopimelate to diaminopimelate and acetate. This chain is N-acetyldiaminopimelate deacetylase, found in Leuconostoc mesenteroides subsp. mesenteroides (strain ATCC 8293 / DSM 20343 / BCRC 11652 / CCM 1803 / JCM 6124 / NCDO 523 / NBRC 100496 / NCIMB 8023 / NCTC 12954 / NRRL B-1118 / 37Y).